A 127-amino-acid chain; its full sequence is Large ribosomal subunit protein bL20 (127 aa).

Belongs to the bacterial ribosomal protein bL20 family.

Its function is as follows. Binds directly to 23S ribosomal RNA and is necessary for the in vitro assembly process of the 50S ribosomal subunit. It is not involved in the protein synthesizing functions of that subunit. The polypeptide is Large ribosomal subunit protein bL20 (Streptomyces avermitilis (strain ATCC 31267 / DSM 46492 / JCM 5070 / NBRC 14893 / NCIMB 12804 / NRRL 8165 / MA-4680)).